The chain runs to 169 residues: Der GTPase-activating protein YihI (169 aa).

2 disordered regions span residues 1 to 83 (MNPL…PTKP) and 150 to 169 (DEEEREEEKQDDIMQLLKGN). Residues 21 to 30 (NREELNAEGR) are compositionally biased toward basic and acidic residues. A compositionally biased stretch (basic residues) spans 31–40 (ARKREKKHRG). Basic and acidic residues-rich tracts occupy residues 51-66 (SGDKHPSGKQQRDPRL) and 150-161 (DEEEREEEKQDD).

It belongs to the YihI family. Interacts with Der.

Functionally, a GTPase-activating protein (GAP) that modifies Der/EngA GTPase function. May play a role in ribosome biogenesis. The polypeptide is Der GTPase-activating protein YihI (Photorhabdus laumondii subsp. laumondii (strain DSM 15139 / CIP 105565 / TT01) (Photorhabdus luminescens subsp. laumondii)).